Consider the following 480-residue polypeptide: F-box only protein 3 (480 aa).

One can recognise an F-box domain in the interval 10–56 (LLTLESLPTDPLLLILSFVDYRDLINCCYVSRRLSQLSTHDPLWRRH). In terms of domain architecture, ApaG spans 278–408 (VATTGDITVS…FHMACPTFRV (131 aa)). Residues 419 to 458 (EYEEMEEEAEEEEEEENDDSADMDESDESDADENESDEGE) show a composition bias toward acidic residues. Residues 419–463 (EYEEMEEEAEEEEEEENDDSADMDESDESDADENESDEGEGEARR) are disordered.

In terms of assembly, part of a SCF (SKP1-cullin-F-box) protein ligase complex SCF(FBXO3) consisting of FBXO3, SKP1, CUL1 and RBX1. Interacts with PML, interaction is direct and takes place either alone or within the SCF complex.

It localises to the nucleus. It participates in protein modification; protein ubiquitination. Functionally, substrate recognition component of the SCF (SKP1-CUL1-F-box protein)-type E3 ubiquitin ligase complex, SCF(FBXO3), which mediates the ubiquitination and subsequent proteasomal degradation of target proteins. Mediates the ubiquitination of HIPK2 and probably that of EP300, leading to rapid degradation by the proteasome. In the presence of PML, HIPK2 ubiquitination still occurs, but degradation is prevented. PML, HIPK2 and FBXO3 may act synergically to activate p53/TP53-dependent transactivation. The SCF(FBXO3) also acts as a regulator of inflammation by mediating ubiquitination and degradation of FBXL2: specifically recognizes FBXL2 phosphorylated at 'Thr-404' and promotes its ubiquitination. In Mus musculus (Mouse), this protein is F-box only protein 3 (Fbxo3).